Consider the following 385-residue polypeptide: 8-amino-7-oxononanoate synthase (385 aa).

A substrate-binding site is contributed by arginine 23. Pyridoxal 5'-phosphate is bound at residue 110 to 111 (GF). Histidine 135 provides a ligand contact to substrate. Residues serine 180, histidine 208, and threonine 234 each coordinate pyridoxal 5'-phosphate. Lysine 237 bears the N6-(pyridoxal phosphate)lysine mark. Threonine 350 provides a ligand contact to substrate.

Belongs to the class-II pyridoxal-phosphate-dependent aminotransferase family. BioF subfamily. Homodimer. Pyridoxal 5'-phosphate is required as a cofactor.

It catalyses the reaction 6-carboxyhexanoyl-[ACP] + L-alanine + H(+) = (8S)-8-amino-7-oxononanoate + holo-[ACP] + CO2. It participates in cofactor biosynthesis; biotin biosynthesis. Catalyzes the decarboxylative condensation of pimeloyl-[acyl-carrier protein] and L-alanine to produce 8-amino-7-oxononanoate (AON), [acyl-carrier protein], and carbon dioxide. This chain is 8-amino-7-oxononanoate synthase, found in Vibrio vulnificus (strain CMCP6).